Consider the following 469-residue polypeptide: Probable monogalactosyldiacylglycerol synthase 2, chloroplastic (469 aa).

Residues 1 to 42 (MVISVATPRRSIRDAVLGGVLGAGGRQLYQPLRCAFYDGAAG) constitute a chloroplast transit peptide.

It belongs to the glycosyltransferase 28 family.

The protein localises to the plastid. It localises to the chloroplast membrane. The enzyme catalyses a 1,2-diacyl-sn-glycerol + UDP-alpha-D-galactose = a 1,2-diacyl-3-O-(beta-D-galactosyl)-sn-glycerol + UDP + H(+). Involved in the synthesis of the major structural component of photosynthetic membranes. This chain is Probable monogalactosyldiacylglycerol synthase 2, chloroplastic (MGD2), found in Oryza sativa subsp. japonica (Rice).